Here is a 1326-residue protein sequence, read N- to C-terminus: Probable serine/threonine-protein kinase gdt8 (1326 aa).

Positions 1 to 22 (MINKILIKLITIIIFCFSFLFA) are cleaved as a signal peptide. Over 23-782 (EEDLIRTPPG…VDRNENLELK (760 aa)) the chain is Extracellular. 2 disordered regions span residues 419–467 (VDQN…GNQG) and 731–762 (EPPTETPTETPTETPTETPTDTPTQTPTQTPI). Low complexity-rich tracts occupy residues 422-460 (NNNNNNNNNNNNNNNNNNNNNNNNNNNNNNNNNNNNNNN) and 731-761 (EPPTETPTETPTETPTETPTDTPTQTPTQTP). Residues 783 to 803 (IALPICLSLALLIGIIIMICI) form a helical membrane-spanning segment. Over 804 to 1326 (FKKVQSNSKL…TKEDKDLDEN (523 aa)) the chain is Cytoplasmic. Positions 833-858 (IVSQPPTVIEEKPQDNSKPDDQKLIE) are disordered. Residues 841–858 (IEEKPQDNSKPDDQKLIE) show a composition bias toward basic and acidic residues. One can recognise a Protein kinase domain in the interval 1036–1292 (IKTEQLIASY…FSEISLHLEI (257 aa)). Residues 1042–1050 (IASYLPSKV) and K1065 each bind ATP. The active-site Proton acceptor is D1158. The disordered stretch occupies residues 1301–1326 (MNESEESTSNHNTNSKTKEDKDLDEN). The segment covering 1316 to 1326 (KTKEDKDLDEN) has biased composition (basic and acidic residues).

In the N-terminal section; belongs to the GDT family. It in the C-terminal section; belongs to the protein kinase superfamily. TKL Ser/Thr protein kinase family.

It localises to the membrane. The enzyme catalyses L-seryl-[protein] + ATP = O-phospho-L-seryl-[protein] + ADP + H(+). It carries out the reaction L-threonyl-[protein] + ATP = O-phospho-L-threonyl-[protein] + ADP + H(+). This chain is Probable serine/threonine-protein kinase gdt8 (gdt8), found in Dictyostelium discoideum (Social amoeba).